Reading from the N-terminus, the 312-residue chain is MNRLAVELPGLSLKNPIMPASGCFGFGREYAKFYDLSVLGAMMIKATTLEARFGNPTPRVAETPSGMLNAIGLQNPGVDYVLAEELPWLAQYDVPIIANVAGSTVEEYVEVAKRISKAPNVHALELNISCPNVKKGGIAFGTVPEVAAELTRAVKEVSDVPVYVKLSPNVTNIVAMAKAIEQAGADGLTMINTLVGMRIDVKTGKPILANGTGGLSGPAIKPIAIRMIYEVSQAVSLPIIGMGGIQSAEDVIEFFYAGASAVAIGTANFIDPYVCPNIIAELPALLDELGFDHISECTGRSWNNGQTVYCGA.

Residues serine 21 and 45 to 46 (KA) contribute to the FMN site. Substrate contacts are provided by residues lysine 45 and 69 to 73 (NAIGL). Residues asparagine 99 and asparagine 127 each coordinate FMN. Residue asparagine 127 coordinates substrate. Cysteine 130 functions as the Nucleophile in the catalytic mechanism. Lysine 165 and isoleucine 191 together coordinate FMN. 192–193 (NT) lines the substrate pocket. Residues glycine 217, 243 to 244 (GG), and 265 to 266 (GT) each bind FMN.

The protein belongs to the dihydroorotate dehydrogenase family. Type 1 subfamily. As to quaternary structure, heterotetramer of 2 PyrK and 2 PyrD type B subunits. FMN serves as cofactor.

The protein resides in the cytoplasm. The enzyme catalyses (S)-dihydroorotate + NAD(+) = orotate + NADH + H(+). It participates in pyrimidine metabolism; UMP biosynthesis via de novo pathway; orotate from (S)-dihydroorotate (NAD(+) route): step 1/1. Catalyzes the conversion of dihydroorotate to orotate with NAD(+) as electron acceptor. The sequence is that of Dihydroorotate dehydrogenase B (NAD(+)), catalytic subunit (pyrD) from Anoxybacillus flavithermus (strain DSM 21510 / WK1).